The primary structure comprises 457 residues: UDP-N-acetylmuramate--L-alanine ligase (457 aa).

118–124 (GTHGKTT) is a binding site for ATP.

This sequence belongs to the MurCDEF family.

It localises to the cytoplasm. The catalysed reaction is UDP-N-acetyl-alpha-D-muramate + L-alanine + ATP = UDP-N-acetyl-alpha-D-muramoyl-L-alanine + ADP + phosphate + H(+). It functions in the pathway cell wall biogenesis; peptidoglycan biosynthesis. Cell wall formation. This is UDP-N-acetylmuramate--L-alanine ligase from Clostridium perfringens (strain 13 / Type A).